We begin with the raw amino-acid sequence, 309 residues long: Mitochondrial fission regulator 1-like (309 aa).

The disordered stretch occupies residues 189-221 (DVTEEDEEEEEEEDREEEEEDVSELVPDPMPPV). The segment covering 190 to 211 (VTEEDEEEEEEEDREEEEEDVS) has biased composition (acidic residues). The residue at position 253 (serine 253) is a Phosphoserine.

This sequence belongs to the MTFR1 family.

The protein resides in the mitochondrion outer membrane. Mitochondrial protein required for adaptation of miochondrial dynamics to metabolic changes. Regulates mitochondrial morphology at steady state and mediates AMPK-dependent stress-induced mitochondrial fragmentation via the control of OPA1 levels. The protein is Mitochondrial fission regulator 1-like (mtfr1l) of Danio rerio (Zebrafish).